The sequence spans 339 residues: GTPase Obg (339 aa).

In terms of domain architecture, Obg spans 1–159 (MKFVDEAFVR…RELKLELKLL (159 aa)). The disordered stretch occupies residues 127 to 147 (NTHFKSSTNRAPRRTTSGEEG). Positions 160–333 (ADVGLLGLPN…LCYDLMSFLE (174 aa)) constitute an OBG-type G domain. GTP-binding positions include 166–173 (GLPNAGKS), 191–195 (FTTLY), 213–216 (DIPG), 283–286 (NKID), and 314–316 (SAI). Residues Ser173 and Thr193 each coordinate Mg(2+).

Belongs to the TRAFAC class OBG-HflX-like GTPase superfamily. OBG GTPase family. Monomer. It depends on Mg(2+) as a cofactor.

Its subcellular location is the cytoplasm. Its function is as follows. An essential GTPase which binds GTP, GDP and possibly (p)ppGpp with moderate affinity, with high nucleotide exchange rates and a fairly low GTP hydrolysis rate. Plays a role in control of the cell cycle, stress response, ribosome biogenesis and in those bacteria that undergo differentiation, in morphogenesis control. The polypeptide is GTPase Obg (Coxiella burnetii (strain CbuG_Q212) (Coxiella burnetii (strain Q212))).